The chain runs to 408 residues: RNA exonuclease 4 (408 aa).

Positions 27–70 (TKEKDVSNSKAHNSRSSQSPSSSLRSSSRIQRKSKHSQGVGQYM) are disordered. A compositionally biased stretch (low complexity) spans 40-55 (SRSSQSPSSSLRSSSR). One can recognise an Exonuclease domain in the interval 131–292 (QYLAIDCEMV…YRLHKKEWER (162 aa)). The span at 310 to 322 (PEHVLGKRGHDEK) shows a compositional bias: basic and acidic residues. Residues 310 to 408 (PEHVLGKRGH…GESWWEQPAA (99 aa)) are disordered. Gly residues predominate over residues 343-357 (GNGGGRQQFPGGGRK). Residues 372–384 (QRVDENGRGDGTS) show a composition bias toward basic and acidic residues.

The protein belongs to the REXO4 family.

The protein resides in the nucleus. In terms of biological role, exoribonuclease involved in ribosome biosynthesis. Involved in the processing of ITS1, the internal transcribed spacer localized between the 18S and 5.8S rRNAs. The sequence is that of RNA exonuclease 4 (REX4) from Cryptococcus neoformans var. neoformans serotype D (strain B-3501A) (Filobasidiella neoformans).